Consider the following 71-residue polypeptide: Lantibiotic Flvbeta.c (71 aa).

The propeptide at 1 to 33 is cleaved by FlvT; that stretch reads MENKFDMEKFKKLAAVVSEDELDTLLDETTVGA. The lanthionine (Ser-Cys); by FlvM2 cross-link spans 35 to 39; that stretch reads SSNDC. Serine 36 carries the 2,3-didehydroalanine (Ser); by FlvM2 modification. Cross-links (beta-methyllanthionine (Thr-Cys); by FlvM2) lie at residues 54–60, 62–65, and 66–69; these read TSKFDWC, TGAC, and TTSC.

In terms of processing, contains LL-lanthionine and DL-beta-methyllanthionine, when coepressed in E.coli with the flavecin synthetase FlvM2.

The protein localises to the secreted. In terms of biological role, lanthionine-containing peptide antibiotic (lantibiotic) that is probably active on Gram-positive bacteria, since its analog [Del1]Flvbeta.c shows antibacterial activity against M.luteus. This activity is not synergistically enhanced by [Del2]Flvalpha.a, an analog of Flvalpha.a, which is encoded by the same operon than Flvbeta.c. The bactericidal activity of lantibiotics is based on depolarization of energized bacterial cytoplasmic membranes, initiated by the formation of aqueous transmembrane pores. The protein is Lantibiotic Flvbeta.c of Ruminococcus flavefaciens.